The following is a 310-amino-acid chain: MDEESVSNGSLFSKFEGEETMGKVLLFSIVSIFTGILFLLLLHLYARLFWWRVEQHFNLNLIQSDDPGSTVIGRNPRRRRFVFAQSQEDPLHNAGLDSKILQSIHVVVFKCTDFKDGLECAVCLSDLVDGDKARVLPRCNHGFHVDCIDMWFQSHSTCPLCRNTVGSVEDTTHGGSEGLPQNQNFESGHSTNQHNPSQDQSFVHEFSTEPLSFPTNVLVWGDQNQVRSAGLVVTEESPSGNFAASYNDHQQESSSTRSQEVTAVVVDIPDNSSENLSERIDEEEPKSPMFTRLRLLKNVLSREKTNNNNV.

The helical transmembrane segment at 24-44 threads the bilayer; the sequence is VLLFSIVSIFTGILFLLLLHL. The RING-type; atypical zinc-finger motif lies at 120–162; the sequence is CAVCLSDLVDGDKARVLPRCNHGFHVDCIDMWFQSHSTCPLCR. 2 disordered regions span residues 170-201 and 240-260; these read DTTH…QDQS and GNFA…RSQE. Over residues 179–201 the composition is skewed to polar residues; it reads LPQNQNFESGHSTNQHNPSQDQS.

Belongs to the RING-type zinc finger family. ATL subfamily.

The protein localises to the membrane. The catalysed reaction is S-ubiquitinyl-[E2 ubiquitin-conjugating enzyme]-L-cysteine + [acceptor protein]-L-lysine = [E2 ubiquitin-conjugating enzyme]-L-cysteine + N(6)-ubiquitinyl-[acceptor protein]-L-lysine.. It functions in the pathway protein modification; protein ubiquitination. The polypeptide is RING-H2 finger protein ATL60 (ATL60) (Arabidopsis thaliana (Mouse-ear cress)).